A 46-amino-acid chain; its full sequence is Large ribosomal subunit protein bL36A (46 aa).

Belongs to the bacterial ribosomal protein bL36 family.

This is Large ribosomal subunit protein bL36A from Sodalis glossinidius (strain morsitans).